The following is a 173-amino-acid chain: RNA polymerase sigma factor TcsR (173 aa).

Positions 122–169 (IKDLTQNEKNIIRKIYLDRLRESEISRELNISRQAVNKTHLRALEKLK) are sigma-70 factor domain-4. Residues 143–162 (ESEISRELNISRQAVNKTHL) constitute a DNA-binding region (H-T-H motif).

The protein belongs to the sigma-70 factor family.

Sigma factors are initiation factors that promote the attachment of RNA polymerase to specific initiation sites and are then released. Transcriptional regulator specifically required to activate expression of the toxin gene locus, composed of tcsL, tcsH and tcdE/utxA. The protein is RNA polymerase sigma factor TcsR of Paraclostridium sordellii (Clostridium sordellii).